Consider the following 374-residue polypeptide: Mannitol-1-phosphate 5-dehydrogenase (374 aa).

3 to 14 (AVHFGAGNIGRG) is an NAD(+) binding site.

The protein belongs to the mannitol dehydrogenase family.

The enzyme catalyses D-mannitol 1-phosphate + NAD(+) = beta-D-fructose 6-phosphate + NADH + H(+). This is Mannitol-1-phosphate 5-dehydrogenase from Shouchella clausii (strain KSM-K16) (Alkalihalobacillus clausii).